Reading from the N-terminus, the 550-residue chain is CCR4-NOT transcription complex subunit 6-like-B (550 aa).

Positions 1 to 148 (MPKEKYDPPD…LYQEPDGMRK (148 aa)) are required for interaction with cnot1, cnot3 and cnot7. LRR repeat units lie at residues 52-73 (HLTV…IAKL), 75-96 (NLVY…LGNV), 98-120 (SLRE…GRLF), and 121-143 (RLQT…YQEP). The interval 153–550 (MLDNLSVHPE…INGVHLPSRR (398 aa)) is nuclease domain. Residue glutamate 235 coordinates Mg(2+). The substrate site is built by glutamate 235, glutamate 271, histidine 355, and proline 360. Mg(2+) is bound at residue aspartate 405. Residue aspartate 405 is the Proton donor/acceptor of the active site. Substrate contacts are provided by asparagine 407, asparagine 474, and phenylalanine 479.

The protein belongs to the CCR4/nocturin family. In terms of assembly, component of the CCR4-NOT complex. Mg(2+) is required as a cofactor.

The protein resides in the cytoplasm. Its subcellular location is the nucleus. The catalysed reaction is Exonucleolytic cleavage of poly(A) to 5'-AMP.. Its function is as follows. Poly(A) nuclease with 3'-5' RNase activity. Catalytic component of the CCR4-NOT complex which is one of the major cellular mRNA deadenylases and is linked to various cellular processes including bulk mRNA degradation, miRNA-mediated repression, translational repression during translational initiation and general transcription regulation. Additional complex functions may be a consequence of its influence on mRNA expression. In Xenopus laevis (African clawed frog), this protein is CCR4-NOT transcription complex subunit 6-like-B (cnot6l-b).